We begin with the raw amino-acid sequence, 313 residues long: Protoheme IX farnesyltransferase (313 aa).

9 helical membrane-spanning segments follow: residues 35–55, 56–76, 98–118, 120–140, 153–173, 180–200, 226–246, 248–268, and 285–305; these read LVIF…HPVL, AFTS…LNMW, VSKP…VVTL, ILVN…YVVI, IVIG…AAAG, MLLF…LALF, ILLY…LGYF, AIYG…TLRV, and FKFS…EVIV.

It belongs to the UbiA prenyltransferase family. Protoheme IX farnesyltransferase subfamily.

Its subcellular location is the cell inner membrane. The enzyme catalyses heme b + (2E,6E)-farnesyl diphosphate + H2O = Fe(II)-heme o + diphosphate. The protein operates within porphyrin-containing compound metabolism; heme O biosynthesis; heme O from protoheme: step 1/1. In terms of biological role, converts heme B (protoheme IX) to heme O by substitution of the vinyl group on carbon 2 of heme B porphyrin ring with a hydroxyethyl farnesyl side group. The sequence is that of Protoheme IX farnesyltransferase from Rhodopseudomonas palustris (strain BisB18).